Reading from the N-terminus, the 236-residue chain is MTETKEEKVHKVFEKISPSYDRMNSVISFKLHVKWRKETMKLMRVQKGTNVLDVCCGTADWSIMMAEEIGPEGHVTGLDFSENMLKVGREKVKEADLHNVELIHGNAMELPFPDNSFDYVTIGFGLRNVPDYMQVLREMYRVLKPGGQLACIDTSQPNIPGWKQVFNAYFRYVMPVFGKFFAKSYKEYSWLQESTREFPGMSKLAEMFQDAGFSYVRYISHSGGASATHFGFKKKE.

S-adenosyl-L-methionine-binding positions include Thr-58, Asp-79, and 106–107; that span reads NA.

It belongs to the class I-like SAM-binding methyltransferase superfamily. MenG/UbiE family.

It catalyses the reaction a 2-demethylmenaquinol + S-adenosyl-L-methionine = a menaquinol + S-adenosyl-L-homocysteine + H(+). The protein operates within quinol/quinone metabolism; menaquinone biosynthesis; menaquinol from 1,4-dihydroxy-2-naphthoate: step 2/2. Its function is as follows. Methyltransferase required for the conversion of demethylmenaquinol (DMKH2) to menaquinol (MKH2). This Listeria welshimeri serovar 6b (strain ATCC 35897 / DSM 20650 / CCUG 15529 / CIP 8149 / NCTC 11857 / SLCC 5334 / V8) protein is Demethylmenaquinone methyltransferase.